The primary structure comprises 368 residues: MTDNVLKLSRKNIKKLIPYQSARRIGGEHGNILLNANESPVSIFFKLKKKPFNRYPECQPSKLISSYAHYVNLSCNQILATRGADEGIELLIKAFCEPGKDAIIYCPPTYDMYRINATIAGVEIKEIPTIKNTWQLDLLNIKLNLSRVKLIYICNPNNPTGNIFFKKDLIFLLNITLGQALVVIDEAYIEFSPEESMTNYLKDYPNLVVLRTLSKAFALAGIRCGFTLAKKEIIQTLSKVISPYPISIPVSDIAIRSLEKDYVQLMKNRVLDSNNNRIWLINQLKNITCVETVFESNANYVLVKFSMFEKVFETLWNKGIILRNQNEKTNLKKCIRISMGTRSESLRLIKELKIFSKKNMCQGEMSEK.

Lysine 215 carries the N6-(pyridoxal phosphate)lysine modification.

This sequence belongs to the class-II pyridoxal-phosphate-dependent aminotransferase family. Histidinol-phosphate aminotransferase subfamily. As to quaternary structure, homodimer. The cofactor is pyridoxal 5'-phosphate.

The catalysed reaction is L-histidinol phosphate + 2-oxoglutarate = 3-(imidazol-4-yl)-2-oxopropyl phosphate + L-glutamate. It participates in amino-acid biosynthesis; L-histidine biosynthesis; L-histidine from 5-phospho-alpha-D-ribose 1-diphosphate: step 7/9. The chain is Histidinol-phosphate aminotransferase (hisC) from Buchnera aphidicola subsp. Acyrthosiphon pisum (strain APS) (Acyrthosiphon pisum symbiotic bacterium).